The sequence spans 464 residues: 3-isopropylmalate dehydratase large subunit (464 aa).

3 residues coordinate [4Fe-4S] cluster: Cys337, Cys397, and Cys400.

This sequence belongs to the aconitase/IPM isomerase family. LeuC type 1 subfamily. In terms of assembly, heterodimer of LeuC and LeuD. It depends on [4Fe-4S] cluster as a cofactor.

It carries out the reaction (2R,3S)-3-isopropylmalate = (2S)-2-isopropylmalate. Its pathway is amino-acid biosynthesis; L-leucine biosynthesis; L-leucine from 3-methyl-2-oxobutanoate: step 2/4. In terms of biological role, catalyzes the isomerization between 2-isopropylmalate and 3-isopropylmalate, via the formation of 2-isopropylmaleate. This Bacillus cytotoxicus (strain DSM 22905 / CIP 110041 / 391-98 / NVH 391-98) protein is 3-isopropylmalate dehydratase large subunit.